We begin with the raw amino-acid sequence, 351 residues long: Thiamine-phosphate synthase (351 aa).

Residues 1 to 128 (MKNPNIIQPE…SKIASEIRYE (128 aa)) are unknown. The tract at residues 129-351 (IYTLEIEILN…IIIKELSHEN (223 aa)) is thiamine-phosphate synthase. 4-amino-2-methyl-5-(diphosphooxymethyl)pyrimidine is bound by residues 180–184 (QHRFK) and Asn-212. Residues Asn-213 and Asp-232 each coordinate Mg(2+). Ser-251 serves as a coordination point for 4-amino-2-methyl-5-(diphosphooxymethyl)pyrimidine. 277-279 (TLT) serves as a coordination point for 2-[(2R,5Z)-2-carboxy-4-methylthiazol-5(2H)-ylidene]ethyl phosphate. Lys-280 is a 4-amino-2-methyl-5-(diphosphooxymethyl)pyrimidine binding site. 2-[(2R,5Z)-2-carboxy-4-methylthiazol-5(2H)-ylidene]ethyl phosphate-binding positions include Gly-307 and 327 to 328 (VS).

The protein belongs to the thiamine-phosphate synthase family.

It carries out the reaction 2-[(2R,5Z)-2-carboxy-4-methylthiazol-5(2H)-ylidene]ethyl phosphate + 4-amino-2-methyl-5-(diphosphooxymethyl)pyrimidine + 2 H(+) = thiamine phosphate + CO2 + diphosphate. The catalysed reaction is 2-(2-carboxy-4-methylthiazol-5-yl)ethyl phosphate + 4-amino-2-methyl-5-(diphosphooxymethyl)pyrimidine + 2 H(+) = thiamine phosphate + CO2 + diphosphate. The enzyme catalyses 4-methyl-5-(2-phosphooxyethyl)-thiazole + 4-amino-2-methyl-5-(diphosphooxymethyl)pyrimidine + H(+) = thiamine phosphate + diphosphate. The protein operates within cofactor biosynthesis; thiamine diphosphate biosynthesis; thiamine phosphate from 4-amino-2-methyl-5-diphosphomethylpyrimidine and 4-methyl-5-(2-phosphoethyl)-thiazole: step 1/1. Its function is as follows. Condenses 4-methyl-5-(beta-hydroxyethyl)thiazole monophosphate (THZ-P) and 2-methyl-4-amino-5-hydroxymethyl pyrimidine pyrophosphate (HMP-PP) to form thiamine monophosphate (TMP). In Prochlorococcus marinus subsp. pastoris (strain CCMP1986 / NIES-2087 / MED4), this protein is Thiamine-phosphate synthase.